Consider the following 460-residue polypeptide: Muscarinic acetylcholine receptor M1 (460 aa).

Residues 1-22 (MNTSAPPAVSPNITVLAPGKGP) lie on the Extracellular side of the membrane. 2 N-linked (GlcNAc...) asparagine glycosylation sites follow: asparagine 2 and asparagine 12. Residues 23–48 (WQVAFIGITTGLLSLATVTGNLLVLI) form a helical membrane-spanning segment. Residues 49–62 (SFKVNTELKTVNNY) lie on the Cytoplasmic side of the membrane. The chain crosses the membrane as a helical span at residues 63–84 (FLLSLACADLIIGTFSMNLYTT). The Extracellular portion of the chain corresponds to 85–95 (YLLMGHWALGT). A helical transmembrane segment spans residues 96–121 (LACDLWLALDYVASNASVMNLLLISF). The cysteines at positions 98 and 178 are disulfide-linked. Over 122–142 (DRYFSVTRPLSYRAKRTPRRA) the chain is Cytoplasmic. A helical transmembrane segment spans residues 143–164 (ALMIGLAWLVSFVLWAPAILFW). The Extracellular segment spans residues 165–185 (QYLVGERTVLAGQCYIQFLSQ). Residues 186-209 (PIITFGTAMAAFYLPVTVMCTLYW) form a helical membrane-spanning segment. The Cytoplasmic portion of the chain corresponds to 210-366 (RIYRETENRA…LVKEKKAART (157 aa)). 3 disordered regions span residues 225-256 (LQGS…ETPP), 274-296 (WKEE…GEEP), and 310-351 (EAQA…QLAK). Threonine 230 is modified (phosphothreonine). Low complexity predominate over residues 238–247 (SSSSERSQPG). The segment covering 328–343 (RPTRKGRERAGKGQKP) has biased composition (basic residues). A helical membrane pass occupies residues 367 to 390 (LSAILLAFIVTWTPYNIMVLVSTF). The Extracellular portion of the chain corresponds to 391 to 397 (CKDCVPE). Residues 398–420 (TLWELGYWLCYVNSTINPMCYAL) traverse the membrane as a helical segment. Residues 421–460 (CNKAFRDTFRLLLLCRWDKRRWRKIPKRPGSVHRTPSRQC) lie on the Cytoplasmic side of the membrane. Threonine 428 carries the post-translational modification Phosphothreonine. Serine 451 carries the post-translational modification Phosphoserine. Position 455 is a phosphothreonine (threonine 455). Residue serine 457 is modified to Phosphoserine.

It belongs to the G-protein coupled receptor 1 family. Muscarinic acetylcholine receptor subfamily. CHRM1 sub-subfamily. Interacts with GPRASP2. Interacts with TMEM147.

The protein resides in the cell membrane. It is found in the postsynaptic cell membrane. In terms of biological role, the muscarinic acetylcholine receptor mediates various cellular responses, including inhibition of adenylate cyclase, breakdown of phosphoinositides and modulation of potassium channels through the action of G proteins. Primary transducing effect is Pi turnover. This chain is Muscarinic acetylcholine receptor M1 (CHRM1), found in Sus scrofa (Pig).